The following is a 1518-amino-acid chain: Hormone receptor 4 (1518 aa).

Disordered stretches follow at residues 30-50 (RCSS…DLLA), 145-327 (TSST…KLSE), 380-587 (PSRI…QPQA), 672-820 (VGVG…SSVA), and 887-913 (SSNS…EPTD). Residues 34–46 (DGESIADTSTSSP) are compositionally biased toward polar residues. Low complexity-rich tracts occupy residues 145-189 (TSST…SSSG) and 208-219 (SSSSAISAAAAS). Gly residues predominate over residues 238-260 (EGGGPAGDGSGATGGGNTSGGST). Over residues 291–323 (STTTTTGRPTLTPTNGVLSSASAGTGISTGSSA) the composition is skewed to low complexity. Residues 400–429 (QRERERERDRERDRERERERDRDREREREQ) show a composition bias toward basic and acidic residues. 2 stretches are compositionally biased toward polar residues: residues 430–451 (SISS…QLSH) and 475–489 (RKSS…SQSM). Composition is skewed to low complexity over residues 490-529 (QHLT…PHSL), 546-586 (HHQQ…QQPQ), 681-705 (GSVQ…QTPS), and 738-799 (GQSH…PSSS). Composition is skewed to gly residues over residues 800–812 (SGGG…GVGG) and 892–902 (GLGGVGGGMGG). Residues 918-993 (PLVCMICEDK…QGMVLQAVRE (76 aa)) constitute a DNA-binding region (nuclear receptor). 2 NR C4-type zinc fingers span residues 921–941 (CMIC…CEGC) and 957–976 (CVAD…CQYC). Disordered regions lie at residues 1015-1101 (KHKK…AAVA), 1142-1210 (LLQA…LPPH), and 1341-1371 (KRRG…STPI). Positions 1021–1060 (QKQQQQAAQQQQQQAAAQQQHQQQQQHQQHQQHQQQQLHS) are enriched in low complexity. A compositionally biased stretch (basic residues) spans 1061–1077 (PLHHHHHQGHQSHHAQQ). 2 stretches are compositionally biased toward low complexity: residues 1078-1101 (QHHP…AAVA) and 1144-1193 (QAPP…HHQQ). Residues 1194–1205 (QGGGGGGAGGGA) show a composition bias toward gly residues. Positions 1250-1518 (HALGMIQTLI…PFVLNSASIR (269 aa)) constitute an NR LBD domain. The segment covering 1351-1368 (HGSPASTPLSTPTGTPLS) has biased composition (low complexity).

Belongs to the nuclear hormone receptor family. NR1 subfamily. As to expression, during L2 and L3 stages, strong constitutive expression is seen in the ring gland. Lower expression is detected in specific neurons of the central nervous system (CNS) (at protein level).

It is found in the nucleus. Its function is as follows. Coordinates growth and maturation by mediating endocrine responses to the attainment of critical weight during larval development. Plays a central role in the genetic cascades triggered by the steroid hormone ecdysone at the onset of metamorphosis, acting as both a repressor of the early ecdysone-induced regulatory genes and an inducer of the ftz-f1 midprepupal competence factor. The polypeptide is Hormone receptor 4 (Hr4) (Drosophila melanogaster (Fruit fly)).